Consider the following 247-residue polypeptide: Proteasome subunit alpha type-7-1 (247 aa).

The protein belongs to the peptidase T1A family. In terms of assembly, the 26S proteasome consists of a 20S proteasome core and two 19S regulatory subunits. The 20S proteasome core is composed of 28 subunits that are arranged in four stacked rings, resulting in a barrel-shaped structure. The two end rings are each formed by seven alpha subunits, and the two central rings are each formed by seven beta subunits. The catalytic chamber with the active sites is on the inside of the barrel.

The protein localises to the cytoplasm. It is found in the nucleus. Its function is as follows. The proteasome is a multicatalytic proteinase complex which is characterized by its ability to cleave peptides with Arg, Phe, Tyr, Leu, and Glu adjacent to the leaving group at neutral or slightly basic pH. The proteasome has an ATP-dependent proteolytic activity. This is Proteasome subunit alpha type-7-1 (Pros28.1) from Drosophila virilis (Fruit fly).